A 359-amino-acid chain; its full sequence is sn-1 linoleoyl-lipid 6-desaturase (359 aa).

A run of 2 helical transmembrane segments spans residues 45-65 and 69-89; these read LIIVLWLFSAWAFVLFAPVIF and LLGCMVLAIALAAFSFNVGHD. Positions 88 to 92 match the Histidine box-1 motif; the sequence is HDANH. Residues 123–128 carry the Histidine box-2 motif; that stretch reads HNYLHH. 3 consecutive transmembrane segments (helical) span residues 165 to 185, 206 to 226, and 231 to 251; these read IWGLYLFIPFYWFLYDVYLVL, LLGIKLLWLGYVFGLPLALGF, and VLIGASVTYMTYGIVVCTIFM. The Histidine box-3 signature appears at 306–310; it reads HHLFP.

It belongs to the fatty acid desaturase type 2 family. Requires Fe(2+) as cofactor.

The protein localises to the membrane. The catalysed reaction is a 1-[(9Z,12Z)-octadecdienoyl]-2-acyl-glycerolipid + 2 reduced [2Fe-2S]-[ferredoxin] + O2 + 2 H(+) = a 1-[(6Z,9Z,12Z)-octadectrienoyl]-2-acyl-glycerolipid + 2 oxidized [2Fe-2S]-[ferredoxin] + 2 H2O. It participates in lipid metabolism; polyunsaturated fatty acid biosynthesis. Desaturase involved in fatty acid biosynthesis. Introduces a double bond at carbon 6 of linoleoyl group (18:2) attached to the sn-1 position of the glycerol moiety of membrane glycerolipids, leading to the formation of gamma-linolenic acid (GLA). This Synechocystis sp. (strain ATCC 27184 / PCC 6803 / Kazusa) protein is sn-1 linoleoyl-lipid 6-desaturase.